The sequence spans 376 residues: 26S proteasome non-ATPase regulatory subunit 13 (376 aa).

In terms of domain architecture, PCI spans Ser-171 to Pro-338. Lys-298 carries the post-translational modification N6-acetyllysine.

Belongs to the proteasome subunit S11 family. In terms of assembly, component of the 19S proteasome regulatory particle complex. The 26S proteasome consists of a 20S core particle (CP) and two 19S regulatory subunits (RP). The regulatory particle is made of a lid composed of 9 subunits including PSMD13, a base containing 6 ATPases and few additional components.

Its function is as follows. Component of the 26S proteasome, a multiprotein complex involved in the ATP-dependent degradation of ubiquitinated proteins. This complex plays a key role in the maintenance of protein homeostasis by removing misfolded or damaged proteins, which could impair cellular functions, and by removing proteins whose functions are no longer required. Therefore, the proteasome participates in numerous cellular processes, including cell cycle progression, apoptosis, or DNA damage repair. The chain is 26S proteasome non-ATPase regulatory subunit 13 (PSMD13) from Homo sapiens (Human).